Reading from the N-terminus, the 398-residue chain is Methionine aminopeptidase 1A (398 aa).

An N-acetylalanine modification is found at Ala2. The segment at 12–65 (TLSCARCEKPAHLQCPKCIDLKLPREQASFCTQECFKAAWSSHKSVHVKAQLSS) adopts a C6H2-type zinc-finger fold. Zn(2+) contacts are provided by Cys15, Cys18, Cys26, Cys29, Cys42, Cys46, His54, and His58. His214 is a binding site for a protein. Zn(2+)-binding residues include Asp231, Asp242, and His305. Residue His312 participates in a protein binding. Residues Glu338 and Glu369 each contribute to the Zn(2+) site.

The protein belongs to the peptidase M24A family. Methionine aminopeptidase type 1 subfamily. In terms of assembly, associates with the 60S ribosomal subunit of the 80S translational complex. Zn(2+) serves as cofactor. The cofactor is Co(2+). Mn(2+) is required as a cofactor. Requires Fe(2+) as cofactor. As to expression, ubiquitous.

The protein resides in the cytoplasm. It catalyses the reaction Release of N-terminal amino acids, preferentially methionine, from peptides and arylamides.. In terms of biological role, cotranslationally removes the N-terminal methionine from nascent proteins. The N-terminal methionine is often cleaved when the second residue in the primary sequence is small and uncharged (Met-Ala-, Cys, Gly, Pro, Ser, Thr, or Val). The protein is Methionine aminopeptidase 1A (MAP1A) of Arabidopsis thaliana (Mouse-ear cress).